The chain runs to 622 residues: Iron transport multicopper oxidase fio1 (622 aa).

Residues 1-22 (MNKFFSFPILGLLLTCVRFVVA) form the signal peptide. Topologically, residues 23 to 553 (KERLFEWNVT…GEMPAGWTSK (531 aa)) are extracellular. 2 N-linked (GlcNAc...) asparagine glycosylation sites follow: Asn30 and Asn79. 2 Plastocyanin-like domains span residues 49 to 147 (IGVN…FIIN) and 194 to 304 (TGLF…LSYN). Cu cation is bound by residues His85 and His87. Residues Asn117 and Asn123 are each glycosylated (N-linked (GlcNAc...) asparagine). 2 residues coordinate Cu cation: His129 and His131. N-linked (GlcNAc...) asparagine glycosylation is found at Asn198, Asn202, Asn234, Asn269, Asn296, Asn338, Asn360, and Asn376. Positions 386–498 (EPVTYGPYTN…SGLLATFIEA (113 aa)) constitute a Plastocyanin-like 3 domain. Cu cation-binding residues include His417, His420, His422, His480, Cys481, His482, and His486. Asn532 carries N-linked (GlcNAc...) asparagine glycosylation. A helical transmembrane segment spans residues 554–574 (AIGTMAACVISACIGMGSIIF). Topologically, residues 575-622 (YGASIHPVPTEELDENDDLQEAALENAAMFLDTDKAVEKVVEGKDEIK) are cytoplasmic.

It belongs to the multicopper oxidase family. It depends on Cu cation as a cofactor.

Its subcellular location is the cell membrane. Functionally, could be an iron transport multicopper oxidase, which is required for Fe(2+) high affinity uptake. May be required to oxidize Fe(2+) and release it from the transporter. Essential component of copper-dependent iron transport. The polypeptide is Iron transport multicopper oxidase fio1 (fio1) (Schizosaccharomyces pombe (strain 972 / ATCC 24843) (Fission yeast)).